A 365-amino-acid chain; its full sequence is U-box domain-containing protein 56 (365 aa).

The stretch at 176 to 281 (YEEQRRRLEI…ELLRALEKGE (106 aa)) forms a coiled coil. Residues 293 to 365 (EPPQCFICPI…AIKDWLQQHP (73 aa)) enclose the U-box domain.

It carries out the reaction S-ubiquitinyl-[E2 ubiquitin-conjugating enzyme]-L-cysteine + [acceptor protein]-L-lysine = [E2 ubiquitin-conjugating enzyme]-L-cysteine + N(6)-ubiquitinyl-[acceptor protein]-L-lysine.. It participates in protein modification; protein ubiquitination. Its function is as follows. Functions as an E3 ubiquitin ligase. This chain is U-box domain-containing protein 56 (PUB56), found in Arabidopsis thaliana (Mouse-ear cress).